The following is a 146-amino-acid chain: Molybdopterin synthase catalytic subunit (146 aa).

Residues 35-37 (LVR), 99-100 (HR), lysine 115, and 122-124 (KKE) contribute to the substrate site.

Belongs to the MoaE family. In terms of assembly, heterotetramer of 2 MoaD subunits and 2 MoaE subunits. Also stable as homodimer. The enzyme changes between these two forms during catalysis.

It carries out the reaction 2 [molybdopterin-synthase sulfur-carrier protein]-C-terminal-Gly-aminoethanethioate + cyclic pyranopterin phosphate + H2O = molybdopterin + 2 [molybdopterin-synthase sulfur-carrier protein]-C-terminal Gly-Gly + 2 H(+). The protein operates within cofactor biosynthesis; molybdopterin biosynthesis. Functionally, converts molybdopterin precursor Z into molybdopterin. This requires the incorporation of two sulfur atoms into precursor Z to generate a dithiolene group. The sulfur is provided by MoaD. The chain is Molybdopterin synthase catalytic subunit (moaE) from Cereibacter sphaeroides (strain ATCC 17023 / DSM 158 / JCM 6121 / CCUG 31486 / LMG 2827 / NBRC 12203 / NCIMB 8253 / ATH 2.4.1.) (Rhodobacter sphaeroides).